A 916-amino-acid polypeptide reads, in one-letter code: Protein prickle (916 aa).

2 disordered regions span residues 49 to 105 and 127 to 176; these read PLSP…AGGS and QHLQ…IPVD. Positions 145–156 are enriched in low complexity; that stretch reads SSPSPALSSSIT. A compositionally biased stretch (gly residues) spans 157–171; it reads TGGGGVTRGGGGGGH. One can recognise a PET domain in the interval 167–275; the sequence is GGGGHIIPVD…TVKQLATNQI (109 aa). LIM zinc-binding domains follow at residues 274-338, 339-399, and 400-462; these read QICD…ETLK, PRCS…MFAE, and YCDF…GEPP. 4 disordered regions span residues 460–593, 635–671, 692–725, and 763–870; these read EPPT…PNHR, VIPG…QPQS, DAIQ…ENLP, and RSKS…DTVY. Polar residues-rich tracts occupy residues 507–517, 526–569, and 642–654; these read SPISERSTPHS, EMST…SRTL, and AKTN…SMPE. Residues 655–671 show a composition bias toward low complexity; it reads LSQSLQQQQQQQQQPQS. The segment covering 777-793 has biased composition (basic residues); the sequence is RSSKSKRRSSHHHQHHR. Low complexity predominate over residues 796–805; that stretch reads GESSSYSGTS. Positions 829 to 844 are enriched in basic and acidic residues; the sequence is VPDVEFIEHQDHHRGD. Over residues 852–867 the composition is skewed to low complexity; it reads RSVCSTCSSSSSSADD.

It belongs to the prickle / espinas / testin family. Interacts with dsh; PET and LIM domains interact with dsh DEP domain, in wing cells. Interacts with Vang in photoreceptor cells.

It is found in the cell membrane. Acts in a planar cell polarity (PCP) complex; polarization along the apical/basal axis of epithelial cells. PCP signaling in the wing disk requires the receptor fz and the cytoplasmic proteins dsh and pk. These act in a feedback loop leading to activation of the jnk cascade and subsequent polarized arrangement of hairs and bristles. Dgo and pk compete with one another for dsh binding, thereby modulating fz dsh activity and ensuring tight control over fz PCP signaling. Vang, stan and pk function together to regulate the establishment of tissue polarity in the adult eye. The sequence is that of Protein prickle from Aedes aegypti (Yellowfever mosquito).